Reading from the N-terminus, the 163-residue chain is NADH-quinone oxidoreductase subunit I (163 aa).

2 consecutive 4Fe-4S ferredoxin-type domains span residues 55-84 (RRYP…IEAE) and 94-123 (TRYD…EGPN). [4Fe-4S] cluster-binding residues include cysteine 64, cysteine 67, cysteine 70, cysteine 74, cysteine 103, cysteine 106, cysteine 109, and cysteine 113.

The protein belongs to the complex I 23 kDa subunit family. As to quaternary structure, NDH-1 is composed of 14 different subunits. Subunits NuoA, H, J, K, L, M, N constitute the membrane sector of the complex. [4Fe-4S] cluster is required as a cofactor.

Its subcellular location is the cell inner membrane. It carries out the reaction a quinone + NADH + 5 H(+)(in) = a quinol + NAD(+) + 4 H(+)(out). Functionally, NDH-1 shuttles electrons from NADH, via FMN and iron-sulfur (Fe-S) centers, to quinones in the respiratory chain. The immediate electron acceptor for the enzyme in this species is believed to be ubiquinone. Couples the redox reaction to proton translocation (for every two electrons transferred, four hydrogen ions are translocated across the cytoplasmic membrane), and thus conserves the redox energy in a proton gradient. The sequence is that of NADH-quinone oxidoreductase subunit I from Caulobacter vibrioides (strain ATCC 19089 / CIP 103742 / CB 15) (Caulobacter crescentus).